Reading from the N-terminus, the 337-residue chain is Tetraacyldisaccharide 4'-kinase (337 aa).

Residue 58–65 participates in ATP binding; the sequence is TVGGSGKT.

This sequence belongs to the LpxK family.

It catalyses the reaction a lipid A disaccharide + ATP = a lipid IVA + ADP + H(+). It functions in the pathway glycolipid biosynthesis; lipid IV(A) biosynthesis; lipid IV(A) from (3R)-3-hydroxytetradecanoyl-[acyl-carrier-protein] and UDP-N-acetyl-alpha-D-glucosamine: step 6/6. In terms of biological role, transfers the gamma-phosphate of ATP to the 4'-position of a tetraacyldisaccharide 1-phosphate intermediate (termed DS-1-P) to form tetraacyldisaccharide 1,4'-bis-phosphate (lipid IVA). The protein is Tetraacyldisaccharide 4'-kinase of Shewanella putrefaciens (strain CN-32 / ATCC BAA-453).